The chain runs to 119 residues: Phosphoribosyl-AMP cyclohydrolase (119 aa).

Mg(2+) is bound at residue Asp71. Cys72 serves as a coordination point for Zn(2+). Asp73 and Asp75 together coordinate Mg(2+). Zn(2+) contacts are provided by Cys90 and Cys97.

The protein belongs to the PRA-CH family. In terms of assembly, homodimer. It depends on Mg(2+) as a cofactor. Zn(2+) serves as cofactor.

Its subcellular location is the cytoplasm. The catalysed reaction is 1-(5-phospho-beta-D-ribosyl)-5'-AMP + H2O = 1-(5-phospho-beta-D-ribosyl)-5-[(5-phospho-beta-D-ribosylamino)methylideneamino]imidazole-4-carboxamide. It participates in amino-acid biosynthesis; L-histidine biosynthesis; L-histidine from 5-phospho-alpha-D-ribose 1-diphosphate: step 3/9. In terms of biological role, catalyzes the hydrolysis of the adenine ring of phosphoribosyl-AMP. The chain is Phosphoribosyl-AMP cyclohydrolase from Brucella abortus (strain 2308).